We begin with the raw amino-acid sequence, 184 residues long: Intraflagellar transport protein 22 homolog (184 aa).

GTP is bound by residues G10–T17, D62–D66, and K122–G125.

It belongs to the small GTPase superfamily. Rab family.

In Xenopus tropicalis (Western clawed frog), this protein is Intraflagellar transport protein 22 homolog (ift22).